A 365-amino-acid chain; its full sequence is Probable dual-specificity RNA methyltransferase RlmN (365 aa).

Glu108 acts as the Proton acceptor in catalysis. Residues 114–352 enclose the Radical SAM core domain; that stretch reads YPDRNTVCIS…SCTVRDTRGR (239 aa). The cysteines at positions 121 and 358 are disulfide-linked. The [4Fe-4S] cluster site is built by Cys128, Cys132, and Cys135. S-adenosyl-L-methionine-binding positions include 179 to 180, Ser213, 236 to 238, and Asn315; these read GE and SLH. The active-site S-methylcysteine intermediate is Cys358.

It belongs to the radical SAM superfamily. RlmN family. Requires [4Fe-4S] cluster as cofactor.

The protein resides in the cytoplasm. The catalysed reaction is adenosine(2503) in 23S rRNA + 2 reduced [2Fe-2S]-[ferredoxin] + 2 S-adenosyl-L-methionine = 2-methyladenosine(2503) in 23S rRNA + 5'-deoxyadenosine + L-methionine + 2 oxidized [2Fe-2S]-[ferredoxin] + S-adenosyl-L-homocysteine. It carries out the reaction adenosine(37) in tRNA + 2 reduced [2Fe-2S]-[ferredoxin] + 2 S-adenosyl-L-methionine = 2-methyladenosine(37) in tRNA + 5'-deoxyadenosine + L-methionine + 2 oxidized [2Fe-2S]-[ferredoxin] + S-adenosyl-L-homocysteine. Its function is as follows. Specifically methylates position 2 of adenine 2503 in 23S rRNA and position 2 of adenine 37 in tRNAs. The polypeptide is Probable dual-specificity RNA methyltransferase RlmN (Mycolicibacterium vanbaalenii (strain DSM 7251 / JCM 13017 / BCRC 16820 / KCTC 9966 / NRRL B-24157 / PYR-1) (Mycobacterium vanbaalenii)).